Consider the following 595-residue polypeptide: Laccase-18 (595 aa).

Residues 1–29 (MEKLSTAASLFCVVVAATALAMAVVGGEA) form the signal peptide. 2 Plastocyanin-like domains span residues 37 to 153 (MVHE…PRNG) and 162 to 316 (KDVP…YAGA). Asn42 and Asn48 each carry an N-linked (GlcNAc...) asparagine glycan. Cu cation is bound by residues His87 and His89. Asn121 carries N-linked (GlcNAc...) asparagine glycosylation. 2 residues coordinate Cu cation: His132 and His134. N-linked (GlcNAc...) asparagine glycans are attached at residues Asn206, Asn345, Asn382, Asn402, Asn409, Asn439, and Asn470. In terms of domain architecture, Plastocyanin-like 3 spans 429 to 571 (DFPVRPPRPF…ATAFIVEDGP (143 aa)). 8 residues coordinate Cu cation: Asn488, His491, His493, His550, Cys551, His552, His556, and Met561. Positions 570-595 (GPTPETSLPPPPPEFKRCGTNGLSQP) are disordered.

This sequence belongs to the multicopper oxidase family. Cu cation is required as a cofactor.

It is found in the secreted. The protein localises to the extracellular space. The protein resides in the apoplast. The catalysed reaction is 4 hydroquinone + O2 = 4 benzosemiquinone + 2 H2O. Lignin degradation and detoxification of lignin-derived products. This chain is Laccase-18 (LAC18), found in Oryza sativa subsp. japonica (Rice).